Here is a 475-residue protein sequence, read N- to C-terminus: ATP synthase subunit beta, chloroplastic (475 aa).

156–163 (GGAGVGKT) is a binding site for ATP.

The protein belongs to the ATPase alpha/beta chains family. As to quaternary structure, F-type ATPases have 2 components, CF(1) - the catalytic core - and CF(0) - the membrane proton channel. CF(1) has five subunits: alpha(3), beta(3), gamma(1), delta(1), epsilon(1). CF(0) has four main subunits: a(1), b(1), b'(1) and c(9-12).

The protein resides in the plastid. Its subcellular location is the chloroplast thylakoid membrane. The enzyme catalyses ATP + H2O + 4 H(+)(in) = ADP + phosphate + 5 H(+)(out). In terms of biological role, produces ATP from ADP in the presence of a proton gradient across the membrane. The catalytic sites are hosted primarily by the beta subunits. In Trieres chinensis (Marine centric diatom), this protein is ATP synthase subunit beta, chloroplastic.